A 224-amino-acid polypeptide reads, in one-letter code: MNPAWALLRLASPQLPIGGYSYSQGLEMAVENGRVADAASARRWISDQLLLNLARFEAPLLLAHCQAALEADWPRLAQLCEEHRASRETRELYQESRQMGYSLQQLLNGLPELDDAARRFLEQHTEPHLALGWALAARAWRISPADALAAWLWSWLENQLAVLMKTLPLGQQAAQRLTSELLPLLQQAQQDASRIDPNPLGSAAFGLSLACMAHERQYSRLFRS.

This sequence belongs to the UreF family. UreD, UreF and UreG form a complex that acts as a GTP-hydrolysis-dependent molecular chaperone, activating the urease apoprotein by helping to assemble the nickel containing metallocenter of UreC. The UreE protein probably delivers the nickel.

It localises to the cytoplasm. Required for maturation of urease via the functional incorporation of the urease nickel metallocenter. In Pseudomonas fluorescens (strain SBW25), this protein is Urease accessory protein UreF.